A 262-amino-acid polypeptide reads, in one-letter code: 4-hydroxy-2-oxovalerate aldolase (262 aa).

The active-site Proton acceptor is histidine 48. Glutamine 149 serves as a coordination point for substrate. Glutamate 151 contacts Mg(2+). Residues alanine 176 and aspartate 177 each coordinate substrate. Residue aspartate 177 participates in Mg(2+) binding.

Belongs to the HpcH/HpaI aldolase family.

The enzyme catalyses (S)-4-hydroxy-2-oxopentanoate = acetaldehyde + pyruvate. It participates in xenobiotic degradation; biphenyl degradation. Catalyzes the reversible retro-aldol cleavage of 4-hydroxy-2-oxovalerate to pyruvate and acetaldehyde. The polypeptide is 4-hydroxy-2-oxovalerate aldolase (bphF) (Novosphingobium aromaticivorans (Sphingomonas aromaticivorans)).